A 983-amino-acid chain; its full sequence is Protein translocase subunit SecA (983 aa).

ATP contacts are provided by residues Q83, 101-105, and D489; that span reads GEGKT. The tract at residues 948–983 is disordered; sequence ISSEEEDNNEKTNINNNEDLERTKGEAQQTAKNPNE. A compositionally biased stretch (polar residues) spans 973-983; the sequence is EAQQTAKNPNE.

It belongs to the SecA family. Monomer and homodimer. Part of the essential Sec protein translocation apparatus which comprises SecA, SecYEG and auxiliary proteins SecDF. Other proteins may also be involved.

The protein localises to the cell membrane. Its subcellular location is the cytoplasm. The catalysed reaction is ATP + H2O + cellular proteinSide 1 = ADP + phosphate + cellular proteinSide 2.. Part of the Sec protein translocase complex. Interacts with the SecYEG preprotein conducting channel. Has a central role in coupling the hydrolysis of ATP to the transfer of proteins into and across the cell membrane, serving as an ATP-driven molecular motor driving the stepwise translocation of polypeptide chains across the membrane. This is Protein translocase subunit SecA from Mesomycoplasma hyopneumoniae (strain 232) (Mycoplasma hyopneumoniae).